The following is a 435-amino-acid chain: Serine--tRNA ligase (435 aa).

234-236 contacts L-serine; that stretch reads TAE. 265-267 contacts ATP; sequence RRE. Residue Glu288 coordinates L-serine. 352–355 lines the ATP pocket; it reads EISS. Residue Ser388 participates in L-serine binding.

Belongs to the class-II aminoacyl-tRNA synthetase family. Type-1 seryl-tRNA synthetase subfamily. Homodimer. The tRNA molecule binds across the dimer.

It localises to the cytoplasm. It catalyses the reaction tRNA(Ser) + L-serine + ATP = L-seryl-tRNA(Ser) + AMP + diphosphate + H(+). It carries out the reaction tRNA(Sec) + L-serine + ATP = L-seryl-tRNA(Sec) + AMP + diphosphate + H(+). The protein operates within aminoacyl-tRNA biosynthesis; selenocysteinyl-tRNA(Sec) biosynthesis; L-seryl-tRNA(Sec) from L-serine and tRNA(Sec): step 1/1. In terms of biological role, catalyzes the attachment of serine to tRNA(Ser). Is also able to aminoacylate tRNA(Sec) with serine, to form the misacylated tRNA L-seryl-tRNA(Sec), which will be further converted into selenocysteinyl-tRNA(Sec). This chain is Serine--tRNA ligase, found in Synechococcus sp. (strain JA-2-3B'a(2-13)) (Cyanobacteria bacterium Yellowstone B-Prime).